The primary structure comprises 475 residues: Aspartyl/glutamyl-tRNA(Asn/Gln) amidotransferase subunit B (475 aa).

The protein belongs to the GatB/GatE family. GatB subfamily. As to quaternary structure, heterotrimer of A, B and C subunits.

It catalyses the reaction L-glutamyl-tRNA(Gln) + L-glutamine + ATP + H2O = L-glutaminyl-tRNA(Gln) + L-glutamate + ADP + phosphate + H(+). The catalysed reaction is L-aspartyl-tRNA(Asn) + L-glutamine + ATP + H2O = L-asparaginyl-tRNA(Asn) + L-glutamate + ADP + phosphate + 2 H(+). Functionally, allows the formation of correctly charged Asn-tRNA(Asn) or Gln-tRNA(Gln) through the transamidation of misacylated Asp-tRNA(Asn) or Glu-tRNA(Gln) in organisms which lack either or both of asparaginyl-tRNA or glutaminyl-tRNA synthetases. The reaction takes place in the presence of glutamine and ATP through an activated phospho-Asp-tRNA(Asn) or phospho-Glu-tRNA(Gln). This chain is Aspartyl/glutamyl-tRNA(Asn/Gln) amidotransferase subunit B, found in Bacillus anthracis (strain A0248).